Consider the following 250-residue polypeptide: NAD-dependent protein deacetylase (250 aa).

Residues 1–244 form the Deacetylase sirtuin-type domain; sequence MECDKVGDLL…PCVVDYIKSQ (244 aa). NAD(+)-binding residues include Ala-22, Thr-26, Phe-33, Arg-34, Gln-98, Ile-100, Asp-101, and His-116. Residue Phe-33 coordinates nicotinamide. Ile-100 and Asp-101 together coordinate nicotinamide. His-116 functions as the Proton acceptor in the catalytic mechanism. The Zn(2+) site is built by Cys-124, Cys-127, Cys-149, and Cys-151. 4 residues coordinate NAD(+): Ser-187, Ser-188, Asn-212, and Val-230.

The protein belongs to the sirtuin family. Class U subfamily. The cofactor is Zn(2+).

It localises to the cytoplasm. The enzyme catalyses N(6)-acetyl-L-lysyl-[protein] + NAD(+) + H2O = 2''-O-acetyl-ADP-D-ribose + nicotinamide + L-lysyl-[protein]. Functionally, NAD-dependent protein deacetylase which modulates the activities of several enzymes which are inactive in their acetylated form. Deacetylates the N-terminal lysine residue of Alba, the major archaeal chromatin protein and that, in turn, increases Alba's DNA binding affinity, thereby repressing transcription. The sequence is that of NAD-dependent protein deacetylase from Sulfurisphaera tokodaii (strain DSM 16993 / JCM 10545 / NBRC 100140 / 7) (Sulfolobus tokodaii).